The following is a 188-amino-acid chain: MGVDIRHNKDRKVHRKEPKSQDIYLRLLVKLYRFLARRSNAPFNRVVLRRLFMSRTNRPPIAVSRLIRKMKLPGRENKIAVVVGTVTDDVRIQDIPKLKICALRVTDGARRRILKAGGQVMTFDQLALASPKGQGTVLLSGPRKAREVYRHFGKAPGTPHSHTKPYVRSKGRKFERARGRRASCGYKN.

The segment at 153–188 (GKAPGTPHSHTKPYVRSKGRKFERARGRRASCGYKN) is disordered. Over residues 161–171 (SHTKPYVRSKG) the composition is skewed to basic residues.

The protein belongs to the eukaryotic ribosomal protein eL18 family. Component of the large ribosomal subunit.

The protein resides in the cytoplasm. It localises to the cytosol. Its subcellular location is the rough endoplasmic reticulum. In terms of biological role, component of the large ribosomal subunit. The ribosome is a large ribonucleoprotein complex responsible for the synthesis of proteins in the cell. In Oreochromis mossambicus (Mozambique tilapia), this protein is Large ribosomal subunit protein eL18 (rpl18).